A 736-amino-acid polypeptide reads, in one-letter code: Prolyl oligopeptidase dbiP (736 aa).

Catalysis depends on charge relay system residues Ser-572, Asp-656, and His-692.

This sequence belongs to the peptidase S9A family. As to quaternary structure, monomer.

The catalysed reaction is Hydrolysis of Pro-|-Xaa &gt;&gt; Ala-|-Xaa in oligopeptides.. The protein operates within mycotoxin biosynthesis. In terms of biological role, prolyl oligopeptidase; part of the gene cluster that mediates the biosynthesis of dendrothelin A, a highly methylated cyclic dodecapeptide showing slight nematodicidal activity. Excises and catalyzes the macrocyclization of the methylated core peptide of dbiMA to yield dendrothelin A. DbiP works in a two-step fashion with an initial cleavage at the N-terminus, followed by a second cleavage at the C-terminus of the core peptide. According to this mechanism, the free N-terminus of the core peptide, generated by the first cleavage, attacks the covalent intermediate of the second cleavage, which results in macrocyclization of the core peptide. The protein is Prolyl oligopeptidase dbiP of Dendrothele bispora (strain CBS 962.96).